We begin with the raw amino-acid sequence, 339 residues long: DNA-directed RNA polymerase subunit alpha (339 aa).

Residues 1–238 (MVDPIVTKNW…EQLSIFINFD (238 aa)) form an alpha N-terminal domain (alpha-NTD) region. An alpha C-terminal domain (alpha-CTD) region spans residues 255-339 (LNENLFRSVD…KAAPQGAPKV (85 aa)).

The protein belongs to the RNA polymerase alpha chain family. Homodimer. The RNAP catalytic core consists of 2 alpha, 1 beta, 1 beta' and 1 omega subunit. When a sigma factor is associated with the core the holoenzyme is formed, which can initiate transcription.

The catalysed reaction is RNA(n) + a ribonucleoside 5'-triphosphate = RNA(n+1) + diphosphate. Its function is as follows. DNA-dependent RNA polymerase catalyzes the transcription of DNA into RNA using the four ribonucleoside triphosphates as substrates. This is DNA-directed RNA polymerase subunit alpha from Anaeromyxobacter sp. (strain Fw109-5).